A 189-amino-acid chain; its full sequence is 3-isopropylmalate dehydratase small subunit (189 aa).

This sequence belongs to the LeuD family. LeuD type 1 subfamily. As to quaternary structure, heterodimer of LeuC and LeuD.

The catalysed reaction is (2R,3S)-3-isopropylmalate = (2S)-2-isopropylmalate. The protein operates within amino-acid biosynthesis; L-leucine biosynthesis; L-leucine from 3-methyl-2-oxobutanoate: step 2/4. Functionally, catalyzes the isomerization between 2-isopropylmalate and 3-isopropylmalate, via the formation of 2-isopropylmaleate. The polypeptide is 3-isopropylmalate dehydratase small subunit (Francisella philomiragia subsp. philomiragia (strain ATCC 25017 / CCUG 19701 / FSC 153 / O#319-036)).